The sequence spans 363 residues: NADH-quinone oxidoreductase subunit H (363 aa).

A run of 10 helical transmembrane segments spans residues 29 to 49, 62 to 82, 96 to 116, 127 to 147, 163 to 183, 202 to 222, 238 to 257, 264 to 286, 299 to 319, and 339 to 359; these read VLKI…YVVW, GPMY…KLLF, FVIA…VVPF, VGLL…ILAG, AAQV…VMIA, FFDW…VSGV, EIVA…LFFL, ILVS…QGWV, KGGW…YIWF, and FIPL…YGVI.

It belongs to the complex I subunit 1 family. In terms of assembly, NDH-1 is composed of 14 different subunits. Subunits NuoA, H, J, K, L, M, N constitute the membrane sector of the complex.

The protein resides in the cell inner membrane. It catalyses the reaction a quinone + NADH + 5 H(+)(in) = a quinol + NAD(+) + 4 H(+)(out). Its function is as follows. NDH-1 shuttles electrons from NADH, via FMN and iron-sulfur (Fe-S) centers, to quinones in the respiratory chain. The immediate electron acceptor for the enzyme in this species is believed to be ubiquinone. Couples the redox reaction to proton translocation (for every two electrons transferred, four hydrogen ions are translocated across the cytoplasmic membrane), and thus conserves the redox energy in a proton gradient. This subunit may bind ubiquinone. This Xanthomonas euvesicatoria pv. vesicatoria (strain 85-10) (Xanthomonas campestris pv. vesicatoria) protein is NADH-quinone oxidoreductase subunit H.